The sequence spans 317 residues: Peroxisome biogenesis protein 7 (317 aa).

WD repeat units follow at residues 58–98 (DTAD…PSNP), 104–144 (EHAR…SVRT), 147–187 (EHAY…STMI), 190–230 (AHDF…VPLA), 234–274 (GHGY…ALVG), and 278–317 (HHTE…PRAS).

Belongs to the WD repeat peroxin-7 family. In terms of assembly, interacts with PEX5; interaction only takes place when PEX7 is associated with cargo proteins. Interacts with PEX13 (via N-terminus) and PEX12 (via C-terminus), but not with PEX14. As to expression, expressed in siliques and leaves, but barely detectable in flowers, stems and roots.

It localises to the cytoplasm. Its subcellular location is the cytosol. It is found in the peroxisome matrix. Receptor required for the peroxisomal import of proteins containing a C-terminal PTS2-type peroxisomal targeting signal. Specifically binds to cargo proteins containing a PTS2 peroxisomal targeting signal in the cytosol. Cargo protein-binding triggers interaction with PEX5 and formation of a ternary complex composed of PEX5 and PEX7 along with PTS2-containing cargo proteins, which is tranlocated into peroxisomes by passing through the PEX13-PEX14 docking complex. The chain is Peroxisome biogenesis protein 7 (PEX7) from Arabidopsis thaliana (Mouse-ear cress).